Consider the following 123-residue polypeptide: Preprofallaxidin-3 (123 aa).

The first 22 residues, 1 to 22 (MASLKKSLFLVLFLGLVSLSIC), serve as a signal peptide directing secretion. The propeptide occupies 23–46 (EEKKRENEDDAEDENHEEESEEKR). The disordered stretch occupies residues 26–46 (KRENEDDAEDENHEEESEEKR). A compositionally biased stretch (acidic residues) spans 30–42 (EDDAEDENHEEES). A Leucine amide modification is found at Leu62. Positions 66–70 (SEEKR) are excised as a propeptide. Phenylalanine amide is present on Phe74. Residues 78-82 (SEEKR) constitute a propeptide that is removed on maturation. Phe88 is subject to Phenylalanine amide. Residues 92 to 96 (SEEKR) constitute a propeptide that is removed on maturation. Position 102 is an isoleucine amide (Ile102). A propeptide spanning residues 106–110 (SEEKR) is cleaved from the precursor. Residue Ile116 is modified to Isoleucine amide. Positions 120–123 (KKKK) are excised as a propeptide.

The protein belongs to the frog skin active peptide (FSAP) family. Brevinin subfamily. Expressed by the skin glands.

It is found in the secreted. Functionally, fallaxidin-1.1 shows no antibacterial activity against Gram-positive or Gram-negative bacteria. Does not inhibit the formation of NO by neuronal nitric oxide synthase. Has no effect on splenocyte proliferation or smooth muscle contraction. Its function is as follows. Fallaxidin-1.2 shows no antibacterial activity against Gram-positive or Gram-negative bacteria. Does not inhibit the formation of NO by neuronal nitric oxide synthase. Has no effect on splenocyte proliferation or smooth muscle contraction. In terms of biological role, fallaxidin-1.3 shows no antibacterial activity against Gram-positive or Gram-negative bacteria. Does not inhibit the formation of NO by neuronal nitric oxide synthase. Has no effect on splenocyte proliferation or smooth muscle contraction. Fallaxidin-3.2 shows antibacterial activity against the Gram-positive bacteria E.faecalis (MIC=100 uM) and L.lactis (MIC=500 uM). No antibacterial activity against the Gram-positive bacteria B.cereus, L.innocua, M.luteus, S.epidermidis, S.uberis and S.aureus, or the Gram-negative bacteria E.cloacae and E.coli. The sequence is that of Preprofallaxidin-3 from Litoria fallax (Eastern dwarf tree frog).